The primary structure comprises 473 residues: Glutamate--tRNA ligase (473 aa).

Residues 11–21 (PSPTGFLHIGG) carry the 'HIGH' region motif. Residues 240 to 244 (KLSKR) carry the 'KMSKS' region motif. Lys243 lines the ATP pocket.

Belongs to the class-I aminoacyl-tRNA synthetase family. Glutamate--tRNA ligase type 1 subfamily. As to quaternary structure, monomer.

The protein resides in the cytoplasm. It catalyses the reaction tRNA(Glu) + L-glutamate + ATP = L-glutamyl-tRNA(Glu) + AMP + diphosphate. In terms of biological role, catalyzes the attachment of glutamate to tRNA(Glu) in a two-step reaction: glutamate is first activated by ATP to form Glu-AMP and then transferred to the acceptor end of tRNA(Glu). The sequence is that of Glutamate--tRNA ligase from Rhodopseudomonas palustris (strain ATCC BAA-98 / CGA009).